A 284-amino-acid polypeptide reads, in one-letter code: MAEITAKMVADLRAATGLGMMECKKALVEAEGNFDKAEEILRIKSGAKAGKLAGRTAAEGVLAYAINGNVGALVEVNCETDFVAKDAGFVEFANFVAKTAAEKKPASVEELSELVESERKAIIAKLGENMSVRRFQVIDTANQLVAYIHGALATEGVLVEYKGSEDVARKIGMHIVAAKPQCVSEAEVDAETVEKERHIYTEQAIASGKPADIAAKMVEGRIRKFLAEITLNGQAFVMNPDQTVAQFAKENDTEVVSFIRYKVGDGIEKAVVDYAAEVAAAAKV.

The involved in Mg(2+) ion dislocation from EF-Tu stretch occupies residues 80–83 (TDFV).

The protein belongs to the EF-Ts family.

It localises to the cytoplasm. Associates with the EF-Tu.GDP complex and induces the exchange of GDP to GTP. It remains bound to the aminoacyl-tRNA.EF-Tu.GTP complex up to the GTP hydrolysis stage on the ribosome. This is Elongation factor Ts from Neisseria gonorrhoeae (strain ATCC 700825 / FA 1090).